A 218-amino-acid polypeptide reads, in one-letter code: Ras-related protein Rab-11B (218 aa).

Position 2 is an N-acetylglycine (G2). The GTP site is built by S20, G21, G23, K24, S25, N26, N37, L38, S40, S42, and T43. Residue S25 coordinates Mg(2+). A Switch 1 motif is present at residues 36–47 (FNLESKSTIGVE). Residues T43 and D66 each contribute to the Mg(2+) site. The Switch 2 signature appears at 67 to 86 (TAGQERYRAITSAYYRGAVG). Residues G69, N124, K125, D127, A155, and L156 each coordinate GTP. Residues 183-218 (DRSAHDESPGNNVVDISVPPTTDGQKSNKLQCCQNM) form a disordered region. Residues 201 to 218 (PPTTDGQKSNKLQCCQNM) show a composition bias toward polar residues. 2 S-geranylgeranyl cysteine lipidation sites follow: C214 and C215. C215 is subject to Cysteine methyl ester. Positions 216–218 (QNM) are cleaved as a propeptide — removed in mature form.

It belongs to the small GTPase superfamily. Rab family. The cofactor is Mg(2+).

The protein localises to the recycling endosome membrane. The protein resides in the cytoplasmic vesicle. Its subcellular location is the secretory vesicle. It localises to the synaptic vesicle membrane. It is found in the phagosome membrane. It carries out the reaction GTP + H2O = GDP + phosphate + H(+). Its activity is regulated as follows. Regulated by guanine nucleotide exchange factors (GEFs) which promote the exchange of bound GDP for free GTP. Regulated by GTPase activating proteins (GAPs) which increase the GTP hydrolysis activity. Inhibited by GDP dissociation inhibitors (GDIs) which prevent Rab-GDP dissociation. Functionally, the small GTPases Rab are key regulators of intracellular membrane trafficking, from the formation of transport vesicles to their fusion with membranes. Rabs cycle between an inactive GDP-bound form and an active GTP-bound form that is able to recruit to membranes different set of downstream effectors directly responsible for vesicle formation, movement, tethering and fusion. That Rab plays a role in endocytic recycling, regulating apical recycling of several transmembrane proteins including cystic fibrosis transmembrane conductance regulator/CFTR, epithelial sodium channel/ENaC, potassium voltage-gated channel, and voltage-dependent L-type calcium channel. May also regulate constitutive and regulated secretion, like insulin granule exocytosis. Required for melanosome transport and release from melanocytes. Also regulates V-ATPase intracellular transport in response to extracellular acidosis. The protein is Ras-related protein Rab-11B of Diplobatis ommata (Ocellated electric ray).